Consider the following 290-residue polypeptide: Small ribosomal subunit protein uS2 (290 aa).

Over residues 263 to 282 the composition is skewed to low complexity; the sequence is ATAGATWEAEAGGDWAAESA. Positions 263–290 are disordered; it reads ATAGATWEAEAGGDWAAESAQPNPETKW.

Belongs to the universal ribosomal protein uS2 family. As to quaternary structure, component of the small ribosomal subunit. Mature ribosomes consist of a small (40S) and a large (60S) subunit. The 40S subunit contains about 33 different proteins and 1 molecule of RNA (18S). The 60S subunit contains about 49 different proteins and 3 molecules of RNA (25S, 5.8S and 5S). Interacts with rps21.

The protein resides in the cytoplasm. Its function is as follows. Required for the assembly and/or stability of the 40S ribosomal subunit. Required for the processing of the 20S rRNA-precursor to mature 18S rRNA in a late step of the maturation of 40S ribosomal subunits. The polypeptide is Small ribosomal subunit protein uS2 (rps0) (Talaromyces stipitatus (strain ATCC 10500 / CBS 375.48 / QM 6759 / NRRL 1006) (Penicillium stipitatum)).